The primary structure comprises 447 residues: tRNA-2-methylthio-N(6)-dimethylallyladenosine synthase (447 aa).

Positions 10 to 128 (KLFCISTYGC…FPEYLHRVLQ (119 aa)) constitute an MTTase N-terminal domain. [4Fe-4S] cluster is bound by residues Cys19, Cys55, Cys89, Cys165, Cys169, and Cys172. The region spanning 151-382 (RKSDVKAFVT…EAINKKVVIK (232 aa)) is the Radical SAM core domain. The region spanning 384–447 (KEYEGKVVEV…PFSLIGEIVE (64 aa)) is the TRAM domain.

This sequence belongs to the methylthiotransferase family. MiaB subfamily. As to quaternary structure, monomer. It depends on [4Fe-4S] cluster as a cofactor.

It localises to the cytoplasm. The enzyme catalyses N(6)-dimethylallyladenosine(37) in tRNA + (sulfur carrier)-SH + AH2 + 2 S-adenosyl-L-methionine = 2-methylsulfanyl-N(6)-dimethylallyladenosine(37) in tRNA + (sulfur carrier)-H + 5'-deoxyadenosine + L-methionine + A + S-adenosyl-L-homocysteine + 2 H(+). Catalyzes the methylthiolation of N6-(dimethylallyl)adenosine (i(6)A), leading to the formation of 2-methylthio-N6-(dimethylallyl)adenosine (ms(2)i(6)A) at position 37 in tRNAs that read codons beginning with uridine. The protein is tRNA-2-methylthio-N(6)-dimethylallyladenosine synthase of Clostridium perfringens (strain ATCC 13124 / DSM 756 / JCM 1290 / NCIMB 6125 / NCTC 8237 / Type A).